Consider the following 218-residue polypeptide: rRNA methyltransferase 2, mitochondrial (218 aa).

S-adenosyl-L-methionine is bound by residues Pro-59–Trp-62, Asp-80, Asp-96–Ile-97, and Asp-133. Lys-173 functions as the Proton acceptor in the catalytic mechanism.

This sequence belongs to the class I-like SAM-binding methyltransferase superfamily. RNA methyltransferase RlmE family.

It is found in the mitochondrion. It carries out the reaction a uridine in 21S rRNA + S-adenosyl-L-methionine = a 2'-O-methyluridine in 21S rRNA + S-adenosyl-L-homocysteine + H(+). In terms of biological role, S-adenosyl-L-methionine-dependent 2'-O-ribose methyltransferase that catalyzes the formation of the 2'-O-methyluridine corresponding to position 2791 in S.cerevisiae 21S mitochondrial large subunit ribosomal RNA (mtLSU rRNA), a universally conserved modification in the peptidyl transferase domain of the mtLSU rRNA. This is rRNA methyltransferase 2, mitochondrial from Schizosaccharomyces pombe (strain 972 / ATCC 24843) (Fission yeast).